A 957-amino-acid polypeptide reads, in one-letter code: Nitrite reductase [NAD(P)H] large subunit (957 aa).

FAD is bound at residue 44 to 79 (YDRVHLTEYFAGRSAESLSLVEGDFFTQHGIELRLS). An NAD(+)-binding site is contributed by 193-225 (LREKISELGVGVHTSKATTEIVRNEQGLQLNFR). [2Fe-2S] cluster is bound by residues Cys-423, Cys-425, Cys-457, and Cys-460. [4Fe-4S] cluster contacts are provided by Cys-639, Cys-645, Cys-679, and Cys-683. Cys-683 provides a ligand contact to siroheme.

Belongs to the nitrite and sulfite reductase 4Fe-4S domain family. As to quaternary structure, homodimer which associates with NirD. Siroheme is required as a cofactor. The cofactor is [2Fe-2S] cluster. Requires [4Fe-4S] cluster as cofactor. FAD serves as cofactor.

The catalysed reaction is NH4(+) + 3 NADP(+) + 2 H2O = nitrite + 3 NADPH + 5 H(+). The enzyme catalyses NH4(+) + 3 NAD(+) + 2 H2O = nitrite + 3 NADH + 5 H(+). It functions in the pathway nitrogen metabolism; nitrate reduction (assimilation). This is Nitrite reductase [NAD(P)H] large subunit (nasB) from Klebsiella oxytoca.